Here is a 71-residue protein sequence, read N- to C-terminus: Translation initiation factor IF-1 (71 aa).

In terms of domain architecture, S1-like spans 1 to 71 (MAKDAIKLRA…TKGRITYRHK (71 aa)).

Belongs to the IF-1 family. Component of the 30S ribosomal translation pre-initiation complex which assembles on the 30S ribosome in the order IF-2 and IF-3, IF-1 and N-formylmethionyl-tRNA(fMet); mRNA recruitment can occur at any time during PIC assembly.

The protein resides in the cytoplasm. Its function is as follows. One of the essential components for the initiation of protein synthesis. Stabilizes the binding of IF-2 and IF-3 on the 30S subunit to which N-formylmethionyl-tRNA(fMet) subsequently binds. Helps modulate mRNA selection, yielding the 30S pre-initiation complex (PIC). Upon addition of the 50S ribosomal subunit IF-1, IF-2 and IF-3 are released leaving the mature 70S translation initiation complex. This chain is Translation initiation factor IF-1, found in Mycoplasmopsis synoviae (strain 53) (Mycoplasma synoviae).